The primary structure comprises 318 residues: Lipoyl synthase (318 aa).

[4Fe-4S] cluster-binding residues include Cys64, Cys69, Cys75, Cys90, Cys94, Cys97, and Ser304. Residues 76–293 (FSGGTATFMI…AEEGYKMGFK (218 aa)) form the Radical SAM core domain.

This sequence belongs to the radical SAM superfamily. Lipoyl synthase family. It depends on [4Fe-4S] cluster as a cofactor.

It is found in the cytoplasm. It carries out the reaction [[Fe-S] cluster scaffold protein carrying a second [4Fe-4S](2+) cluster] + N(6)-octanoyl-L-lysyl-[protein] + 2 oxidized [2Fe-2S]-[ferredoxin] + 2 S-adenosyl-L-methionine + 4 H(+) = [[Fe-S] cluster scaffold protein] + N(6)-[(R)-dihydrolipoyl]-L-lysyl-[protein] + 4 Fe(3+) + 2 hydrogen sulfide + 2 5'-deoxyadenosine + 2 L-methionine + 2 reduced [2Fe-2S]-[ferredoxin]. The protein operates within protein modification; protein lipoylation via endogenous pathway; protein N(6)-(lipoyl)lysine from octanoyl-[acyl-carrier-protein]: step 2/2. In terms of biological role, catalyzes the radical-mediated insertion of two sulfur atoms into the C-6 and C-8 positions of the octanoyl moiety bound to the lipoyl domains of lipoate-dependent enzymes, thereby converting the octanoylated domains into lipoylated derivatives. The chain is Lipoyl synthase from Pseudomonas syringae pv. tomato (strain ATCC BAA-871 / DC3000).